The chain runs to 142 residues: Endoribonuclease YbeY (142 aa).

Zn(2+)-binding residues include His107, His111, and Asp117.

Belongs to the endoribonuclease YbeY family. Requires Zn(2+) as cofactor.

It localises to the cytoplasm. Its function is as follows. Single strand-specific metallo-endoribonuclease involved in late-stage 70S ribosome quality control and in maturation of the 3' terminus of the 16S rRNA. The protein is Endoribonuclease YbeY of Chlorobium phaeobacteroides (strain DSM 266 / SMG 266 / 2430).